A 312-amino-acid polypeptide reads, in one-letter code: Protein Rep40 (312 aa).

One can recognise an SF3 helicase domain in the interval 84 to 239 (DPQYAASVFL…LDHDFGKVTK (156 aa)). Residue 110 to 117 (GPATTGKT) coordinates ATP. The segment at 264-301 (KGGAKKRPAPSDADISEPKRVRESVAQPSTSDAEASIN) is disordered.

In terms of assembly, homooligomer.

It localises to the host nucleus. The enzyme catalyses ATP + H2O = ADP + phosphate + H(+). Its function is as follows. Plays a critical role during packaging of viral DNA into empty capsids, where they are thought to be part of the packaging motor complex. The single stranded genomic DNA is packaged in a 3' to 5' direction and requires the association of viral DNA with Rep40. This Mammalia (AAV-2) protein is Protein Rep40 (Rep40).